The chain runs to 1070 residues: [F-actin]-monooxygenase MICAL1 (1070 aa).

The segment at 1-489 (MASTISTNPA…RDLYDMEAKE (489 aa)) is monooxygenase domain. Residues Cys95, 114 to 116 (EKR), 121 to 123 (RHN), Phe181, Tyr293, and Asp393 contribute to the FAD site. A Phosphothreonine modification is found at Thr475. The 105-residue stretch at 508 to 612 (VGSQEELLRW…YLSHFHSAFK (105 aa)) folds into the Calponin-homology (CH) domain. Residues 643–690 (QRTRTQENGEDAGGKKPRLEVKAETPSTEEPPVPKPDEPMTPPSQQQD) are disordered. A compositionally biased stretch (basic and acidic residues) spans 646–665 (RTQENGEDAGGKKPRLEVKA). Residues 671–684 (EEPPVPKPDEPMTP) are compositionally biased toward pro residues. Residues 695–757 (DLCALCGQHL…LQHLPQTGHE (63 aa)) form the LIM zinc-binding domain. Cys697, Cys700, His718, Cys721, Cys724, Cys727, Cys747, and His750 together coordinate Zn(2+). Disordered regions lie at residues 754-838 (TGHE…RSCS) and 865-887 (MEMG…EDVP). Positions 755 to 766 (GHEEDSSDRGPE) are enriched in basic and acidic residues. Polar residues predominate over residues 770 to 781 (LPMSSENNTPSG). Residues Ser793, Ser875, and Ser876 each carry the phosphoserine modification. Acidic residues predominate over residues 876–887 (SEEETEEEEDVP). The important for interaction with RAB8A stretch occupies residues 904 to 1070 (GTMNNYPTWR…ELASEPGVQG (167 aa)). The region spanning 921–1070 (KEEEMKRFCK…ELASEPGVQG (150 aa)) is the bMERB domain. Residues 928 to 1030 (FCKAQAIQRR…EETLKTAADR (103 aa)) are a coiled coil. Ser1060 bears the Phosphoserine mark.

It belongs to the Mical family. Interacts with STK38 and STK38L. Associates with the SH3 domain of NEDD9. Interacts with VIM and PLXNA3. Interacts with RAB1B, RAB8A, RAB10, RAB13 and RAB15 (in their GTP-bound forms); binding to RAB1B is of low affinity compared to other Rab proteins; at least in case of RAB8A and RAB10 can bind 2 molecules of the Rab proteins simultaneously. Interacts with GRAF1/ARHGAP26, GRAF2/ARHGAP10, RAB8A, RAB8B and RAB10; may bind simultaneously to GRAFs and Rabs and connects GRAFs to Rabs. Does not interact with RAB1 and RAB11A. FAD is required as a cofactor.

It is found in the cytoplasm. Its subcellular location is the cytoskeleton. It localises to the endosome membrane. The protein resides in the midbody. It carries out the reaction L-methionyl-[F-actin] + NADPH + O2 + H(+) = L-methionyl-(R)-S-oxide-[F-actin] + NADP(+) + H2O. It catalyses the reaction NADPH + O2 + H(+) = H2O2 + NADP(+). Its function is as follows. Monooxygenase that promotes depolymerization of F-actin by mediating oxidation of specific methionine residues on actin to form methionine-sulfoxide, resulting in actin filament disassembly and preventing repolymerization. In the absence of actin, it also functions as a NADPH oxidase producing H(2)O(2). Acts as a cytoskeletal regulator that connects NEDD9 to intermediate filaments. Also acts as a negative regulator of apoptosis via its interaction with STK38 and STK38L; acts by antagonizing STK38 and STK38L activation by MST1/STK4. Involved in regulation of lamina-specific connectivity in the nervous system such as the development of lamina-restricted hippocampal connections. Through redox regulation of the actin cytoskeleton controls the intracellular distribution of secretory vesicles containing L1/neurofascin/NgCAM family proteins in neurons, thereby regulating their cell surface levels. May act as Rab effector protein and play a role in vesicle trafficking. Promotes endosomal tubule extension by associating with RAB8 (RAB8A or RAB8B), RAB10 and GRAF (GRAF1/ARHGAP26 or GRAF2/ARHGAP10) on the endosomal membrane which may connect GRAFs to Rabs, thereby participating in neosynthesized Rab8-Rab10-Rab11-dependent protein export. The polypeptide is [F-actin]-monooxygenase MICAL1 (MICAL1) (Bos taurus (Bovine)).